The sequence spans 248 residues: uncharacterized protein (248 aa).

Residues 30–50 (LIALAIFIGLIAIFMFGCKAA) traverse the membrane as a helical segment. 2 disordered regions span residues 59 to 91 (NRDT…MDPP) and 208 to 248 (TTES…VSTR). Composition is skewed to polar residues over residues 210 to 220 (ESPAPAQSTSN) and 239 to 248 (SLHNETVSTR).

The protein resides in the membrane. This is an uncharacterized protein from Caenorhabditis elegans.